Reading from the N-terminus, the 315-residue chain is MKWAEFRVHTTQEAVEPVSNILHELGAAGVAIEDPQDLVTEWSVKYGEVYELSPEDYPDEGVMVKAYFPMGATFKETIAEVRRRVHNLVSFQIDIGHGTMDYTEVKEEDWATAWKSFYHPVQVTEQVTIVPTWEEYSARPGEIVIELDPGMAFGTGTHPTTILSLQALEQAVKQGDAVIDVGTGSGILAIAAWKFGAESITALDLDEVAVNSAKANVALNSASDFVHVQQGNLLDDVASESADVLVSNILAEVILQFTADAYRVVKRGGLFLTSGIISSKREAVEGALKAVGFLIQEVNELDDWVAIVAQKPSQA.

Thr-161, Gly-182, Asp-204, and Asn-248 together coordinate S-adenosyl-L-methionine.

This sequence belongs to the methyltransferase superfamily. PrmA family.

The protein localises to the cytoplasm. The catalysed reaction is L-lysyl-[protein] + 3 S-adenosyl-L-methionine = N(6),N(6),N(6)-trimethyl-L-lysyl-[protein] + 3 S-adenosyl-L-homocysteine + 3 H(+). Methylates ribosomal protein L11. The sequence is that of Ribosomal protein L11 methyltransferase from Shouchella clausii (strain KSM-K16) (Alkalihalobacillus clausii).